The sequence spans 240 residues: Probable transcriptional regulatory protein SO_3401 (240 aa).

This sequence belongs to the TACO1 family.

It is found in the cytoplasm. The protein is Probable transcriptional regulatory protein SO_3401 of Shewanella oneidensis (strain ATCC 700550 / JCM 31522 / CIP 106686 / LMG 19005 / NCIMB 14063 / MR-1).